The sequence spans 250 residues: Small ribosomal subunit protein uS2 (250 aa).

It belongs to the universal ribosomal protein uS2 family.

This is Small ribosomal subunit protein uS2 from Paracidovorax citrulli (strain AAC00-1) (Acidovorax citrulli).